The following is a 418-amino-acid chain: Putative ion-transport protein YfeO (418 aa).

12 helical membrane-spanning segments follow: residues 10-30 (LLLS…LIMV), 54-74 (DSPL…GLVI), 99-119 (ALPG…SLGP), 120-140 (EHPI…RLLP), 149-169 (ILAS…AALI), 186-206 (LFAP…FFHP), 223-243 (ILSG…AVWC), 258-278 (VFVL…GGPV), 300-320 (DYFL…ASGF), 322-342 (GGRI…LHEH), 343-363 (VPAV…VLVV), and 371-391 (LFMA…CIVM).

The protein belongs to the chloride channel (TC 2.A.49) family.

Its subcellular location is the cell membrane. This is Putative ion-transport protein YfeO from Escherichia coli O45:K1 (strain S88 / ExPEC).